The sequence spans 250 residues: Probable replication-associated protein repA2 (250 aa).

Belongs to the IncFII RepA family.

In terms of biological role, this protein is essential for plasmid replication; it is involved in copy control functions. This is Probable replication-associated protein repA2 (repA2) from Buchnera aphidicola subsp. Schizaphis graminum (strain Sg).